A 218-amino-acid chain; its full sequence is NADH dehydrogenase [ubiquinone] iron-sulfur protein 7, mitochondrial (218 aa).

Positions L34–R48 are enriched in low complexity. Residues L34 to L61 form a disordered region. Residues P49–G60 show a composition bias toward pro residues. Residues C93, C94, C158, and C188 each contribute to the [4Fe-4S] cluster site.

The protein belongs to the complex I 20 kDa subunit family. As to quaternary structure, complex I is composed of at least 49 different subunits. This is a component of the iron-sulfur (IP) fragment of the enzyme. Requires [4Fe-4S] cluster as cofactor.

It is found in the mitochondrion. The enzyme catalyses a ubiquinone + NADH + 5 H(+)(in) = a ubiquinol + NAD(+) + 4 H(+)(out). In terms of biological role, core subunit of the mitochondrial membrane respiratory chain NADH dehydrogenase (Complex I) that is believed to belong to the minimal assembly required for catalysis. Complex I functions in the transfer of electrons from NADH to the respiratory chain. The immediate electron acceptor for the enzyme is believed to be ubiquinone. The polypeptide is NADH dehydrogenase [ubiquinone] iron-sulfur protein 7, mitochondrial (Arabidopsis thaliana (Mouse-ear cress)).